The following is a 769-amino-acid chain: 3-O-beta-D-glucopyranosyl-beta-D-glucuronide phosphorylase (769 aa).

Aspartate 457 serves as the catalytic Proton donor.

Belongs to the glycosyl hydrolase 94 family. As to quaternary structure, homodimer.

The protein resides in the cytoplasm. The enzyme catalyses 3-O-beta-D-glucosyl-D-glucuronate + phosphate = aldehydo-D-glucuronate + alpha-D-glucose 1-phosphate. It catalyses the reaction a 3-O-beta-D-glucosyl-beta-D-glucuronoside + phosphate = a beta-D-glucuronoside + alpha-D-glucose 1-phosphate. Glycoside phosphorylase that catalyzes the reversible phosphorolysis of 3-O-beta-D-glucosyl-D-glucuronate into D-glucuronic acid and alpha-D-glucose 1-phosphate. Cannot phosphorolyze cellobionic acid and laminaribiose. In the reverse direction, using alpha-D-glucose 1-phosphate as a donor substrate, the enzyme acts on D-glucuronate and its artificial derivative p-nitrophenyl-beta-D-glucuronide. The apparent catalytic efficiency towards p-nitrophenyl-beta-D-glucuronide is approximately 5-fold higher than that towards D-glucuronic acid. Is probably involved in the metabolism of oligosaccharides containing the 3-O-beta-D-glucopyranosyl-beta-D-glucuronide structure released from bacterial and plant acidic carbohydrates. This is 3-O-beta-D-glucopyranosyl-beta-D-glucuronide phosphorylase from Paenibacillus borealis.